A 210-amino-acid chain; its full sequence is Putative protein-lysine deacylase ABHD14B (210 aa).

An N-acetylalanine modification is found at Ala-2. Ser-91 is modified (phosphoserine). Active-site charge relay system residues include Ser-111, Asp-162, and His-188.

This sequence belongs to the AB hydrolase superfamily. ABHD14 family. In terms of assembly, may interact with TAF1. As to expression, ubiquitous. Detected in spleen, thymus, prostate, testis, ovary, small intestine, colon, peripheral blood leukocyte, heart, placenta, lung, liver, skeletal muscle, pancreas and kidney.

The protein localises to the cytoplasm. It localises to the nucleus. The enzyme catalyses L-lysyl-[protein] + acetyl-CoA = N(6)-acetyl-L-lysyl-[protein] + CoA + H(+). Functionally, acts as an atypical protein-lysine deacetylase in vitro. Catalyzes the deacetylation of lysine residues using CoA as substrate, generating acetyl-CoA and the free amine of protein-lysine residues. Additional experiments are however required to confirm the protein-lysine deacetylase activity in vivo. Has hydrolase activity towards various surrogate p-nitrophenyl (pNp) substrates, such as pNp-butyrate, pNp-acetate and pNp-octanoate in vitro, with a strong preference for pNp-acetate. May activate transcription. The polypeptide is Putative protein-lysine deacylase ABHD14B (Homo sapiens (Human)).